Here is a 111-residue protein sequence, read N- to C-terminus: MKENKIRKNKEFRHVYRRGKSYSNKLLVLYVCKNRYNINRLGVSVSKKVGKSVVRNKVKRLIKESYRLNLDKDMKRGYDLVFIARNSSNDKDYKDIESALINLLKKAGIYN.

This sequence belongs to the RnpA family. In terms of assembly, consists of a catalytic RNA component (M1 or rnpB) and a protein subunit.

It carries out the reaction Endonucleolytic cleavage of RNA, removing 5'-extranucleotides from tRNA precursor.. In terms of biological role, RNaseP catalyzes the removal of the 5'-leader sequence from pre-tRNA to produce the mature 5'-terminus. It can also cleave other RNA substrates such as 4.5S RNA. The protein component plays an auxiliary but essential role in vivo by binding to the 5'-leader sequence and broadening the substrate specificity of the ribozyme. In Clostridium botulinum (strain 657 / Type Ba4), this protein is Ribonuclease P protein component.